The primary structure comprises 310 residues: HPr kinase/phosphorylase (310 aa).

Active-site residues include H138 and K159. Residue G153–S160 coordinates ATP. S160 serves as a coordination point for Mg(2+). D177 functions as the Proton acceptor; for phosphorylation activity. Proton donor; for dephosphorylation activity in the catalytic mechanism. An important for the catalytic mechanism of both phosphorylation and dephosphorylation region spans residues L201–D210. E202 contacts Mg(2+). R243 is an active-site residue. Residues P264–R269 form an important for the catalytic mechanism of dephosphorylation region.

This sequence belongs to the HPrK/P family. Homohexamer. The cofactor is Mg(2+).

It carries out the reaction [HPr protein]-L-serine + ATP = [HPr protein]-O-phospho-L-serine + ADP + H(+). It catalyses the reaction [HPr protein]-O-phospho-L-serine + phosphate + H(+) = [HPr protein]-L-serine + diphosphate. In terms of biological role, catalyzes the ATP- as well as the pyrophosphate-dependent phosphorylation of a specific serine residue in HPr, a phosphocarrier protein of the phosphoenolpyruvate-dependent sugar phosphotransferase system (PTS). HprK/P also catalyzes the pyrophosphate-producing, inorganic phosphate-dependent dephosphorylation (phosphorolysis) of seryl-phosphorylated HPr (P-Ser-HPr). The two antagonistic activities of HprK/P are regulated by several intracellular metabolites, which change their concentration in response to the absence or presence of rapidly metabolisable carbon sources (glucose, fructose, etc.) in the growth medium. Therefore, by controlling the phosphorylation state of HPr, HPrK/P is a sensor enzyme that plays a major role in the regulation of carbon metabolism and sugar transport: it mediates carbon catabolite repression (CCR), and regulates PTS-catalyzed carbohydrate uptake and inducer exclusion. The sequence is that of HPr kinase/phosphorylase (hprK) from Streptococcus pyogenes serotype M3 (strain ATCC BAA-595 / MGAS315).